The chain runs to 348 residues: MMTLILILGIFLGTMTTMFSSSWFFAWLGLEINMMAIIPMMLFPLSQRALESSMKYFISQAVASSTIILASSWNYFSSGQWTISFMSDNLAITLIILALLLKLGLAPLHFWLPEVLQGVNLHMGLIISTWQKLAPLTLLIQVSSNLNNMYILISISVMSVLAGGFGGLNQTQLRKLLAYSSISHMGWIVGVMAVSASLSWVTTVIYLIINFSIFTILIELNSTKISDLMLSWSKTSWSHTKCILVLLSLGGLPPFTGFFLKLSISNALISNSLILMTILLMAGSLISLFFYLRLSFMTALLLAPTNLQIKGTWKSPHYSNLLFNLMFLFSILLLPLSPFMISLFQISW.

11 helical membrane-spanning segments follow: residues 1-21 (MMTL…MFSS), 23-43 (WFFA…MMLF), 56-76 (YFIS…WNYF), 92-112 (ITLI…HFWL), 123-143 (MGLI…IQVS), 148-168 (NMYI…FGGL), 176-196 (LLAY…AVSA), 198-218 (LSWV…TILI), 242-262 (CILV…FLKL), 272-292 (SLIL…FFYL), and 321-341 (LLFN…PFMI).

This sequence belongs to the complex I subunit 2 family.

Its subcellular location is the mitochondrion inner membrane. It carries out the reaction a ubiquinone + NADH + 5 H(+)(in) = a ubiquinol + NAD(+) + 4 H(+)(out). Its function is as follows. Core subunit of the mitochondrial membrane respiratory chain NADH dehydrogenase (Complex I) that is believed to belong to the minimal assembly required for catalysis. Complex I functions in the transfer of electrons from NADH to the respiratory chain. The immediate electron acceptor for the enzyme is believed to be ubiquinone. This chain is NADH-ubiquinone oxidoreductase chain 2 (MT-ND2), found in Myxine glutinosa (Atlantic hagfish).